We begin with the raw amino-acid sequence, 258 residues long: Ribosomal RNA small subunit methyltransferase J (258 aa).

S-adenosyl-L-methionine-binding positions include 106 to 107, 122 to 123, and Asp-181; these read RD and ER.

The protein belongs to the methyltransferase superfamily. RsmJ family.

It is found in the cytoplasm. The enzyme catalyses guanosine(1516) in 16S rRNA + S-adenosyl-L-methionine = N(2)-methylguanosine(1516) in 16S rRNA + S-adenosyl-L-homocysteine + H(+). In terms of biological role, specifically methylates the guanosine in position 1516 of 16S rRNA. This is Ribosomal RNA small subunit methyltransferase J from Pseudoalteromonas atlantica (strain T6c / ATCC BAA-1087).